A 78-amino-acid chain; its full sequence is Biotin synthase auxiliary protein (78 aa).

The protein belongs to the BsaP family. Iron-sulfur cluster is required as a cofactor.

Its function is as follows. Required for the activity of the biotin synthase BioB. The chain is Biotin synthase auxiliary protein from Mycolicibacterium smegmatis (strain ATCC 700084 / mc(2)155) (Mycobacterium smegmatis).